A 1087-amino-acid chain; its full sequence is Kinesin-like protein KIN-14F (1087 aa).

The Calponin-homology (CH) domain maps to 1 to 110 (MDQGAMETLP…CILCLKGFYE (110 aa)). The disordered stretch occupies residues 136–155 (SSPPQYGIGSESTTDESVSL). Positions 377–705 (TIRVYCRVRP…LKFAQRVASI (329 aa)) constitute a Kinesin motor domain. 461-468 (GQTGSGKT) is an ATP binding site. Residues 710–749 (ARSNKETGEIRDLKDEISSLKSAMEKKEAELEQLRSGSIR) are a coiled coil. Disordered stretches follow at residues 740–858 (LEQL…PVSR), 923–949 (QGGV…FQKL), and 1004–1087 (DSTL…FMVP). 3 stretches are compositionally biased toward polar residues: residues 744–754 (RSGSIRNTTEC), 780–797 (PQPN…CSTG), and 836–856 (TDRA…NLPV). A compositionally biased stretch (polar residues) spans 1017–1033 (EPPSKSKNAQRNSSKNS). A compositionally biased stretch (basic and acidic residues) spans 1042–1054 (YAHEDTSLVDDKP). Residues 1076–1087 (SRSTHHARFMVP) show a composition bias toward basic residues.

It belongs to the TRAFAC class myosin-kinesin ATPase superfamily. Kinesin family. KIN-14 subfamily. In terms of assembly, interacts (via C-terminus) with VDAC3. Expressed in roots, leaves, stems and flowers (at protein level).

Its subcellular location is the cytoplasm. It is found in the cytoskeleton. The protein resides in the mitochondrion. Functionally, required for keeping the ATP levels stable and balancing the aerobic respiration pathways during seed germination at low temperature. In Arabidopsis thaliana (Mouse-ear cress), this protein is Kinesin-like protein KIN-14F.